Consider the following 332-residue polypeptide: Ferredoxin--NADP reductase (332 aa).

Asp33, Gln41, Tyr46, Ala86, Ile121, Asp282, and Ser325 together coordinate FAD.

This sequence belongs to the ferredoxin--NADP reductase type 2 family. In terms of assembly, homodimer. FAD serves as cofactor.

The enzyme catalyses 2 reduced [2Fe-2S]-[ferredoxin] + NADP(+) + H(+) = 2 oxidized [2Fe-2S]-[ferredoxin] + NADPH. The protein is Ferredoxin--NADP reductase of Metallosphaera sedula (strain ATCC 51363 / DSM 5348 / JCM 9185 / NBRC 15509 / TH2).